Reading from the N-terminus, the 147-residue chain is UPF0178 protein VP2328 (147 aa).

Belongs to the UPF0178 family.

The protein is UPF0178 protein VP2328 of Vibrio parahaemolyticus serotype O3:K6 (strain RIMD 2210633).